The sequence spans 369 residues: MNDETTPANKNPEKAELRCGWTTGACATAATKAALTALITGEFPDPVGIILPKGEVPYFQLAYEGLGEGYAMAGIVKDAGDDPDVTHGATIISTVYPAPPGTGIIFRAGEGVGTVTREGLAIPPPGEAAINPVPRRMMTEICEAICAEYGLPADLVITISVPGGEEIAQKTWNPRLGIIGGISILGTTGVVHPFSCSAWIHSIHRGIDVARAAGQKHVLGATGSTSEDAAQALYNLPDFAILDMGDFAGGVLKYLREHPIDRLTIAGGFAKLTKLAQGALDLHSSRSQVDKGFLWQIAERAGAPADMKERILLANTAMEVLELTQSIGIDIAGPIALEARQTALKTLRGAPVEVEIIVTDRKGNILARV.

It belongs to the CbiD family.

It carries out the reaction Co-precorrin-5B + S-adenosyl-L-methionine = Co-precorrin-6A + S-adenosyl-L-homocysteine. It participates in cofactor biosynthesis; adenosylcobalamin biosynthesis; cob(II)yrinate a,c-diamide from sirohydrochlorin (anaerobic route): step 6/10. Functionally, catalyzes the methylation of C-1 in cobalt-precorrin-5B to form cobalt-precorrin-6A. This chain is Cobalt-precorrin-5B C(1)-methyltransferase, found in Brucella melitensis biotype 1 (strain ATCC 23456 / CCUG 17765 / NCTC 10094 / 16M).